The chain runs to 362 residues: Probable dual-specificity RNA methyltransferase RlmN (362 aa).

The active-site Proton acceptor is the E105. One can recognise a Radical SAM core domain in the interval 111-344 (HEYGNSICVT…VTIRREQGHD (234 aa)). An intrachain disulfide couples C118 to C349. [4Fe-4S] cluster-binding residues include C125, C129, and C132. S-adenosyl-L-methionine is bound by residues 175-176 (GE), S207, 230-232 (SLH), and N306. C349 serves as the catalytic S-methylcysteine intermediate.

It belongs to the radical SAM superfamily. RlmN family. Requires [4Fe-4S] cluster as cofactor.

The protein resides in the cytoplasm. It catalyses the reaction adenosine(2503) in 23S rRNA + 2 reduced [2Fe-2S]-[ferredoxin] + 2 S-adenosyl-L-methionine = 2-methyladenosine(2503) in 23S rRNA + 5'-deoxyadenosine + L-methionine + 2 oxidized [2Fe-2S]-[ferredoxin] + S-adenosyl-L-homocysteine. The catalysed reaction is adenosine(37) in tRNA + 2 reduced [2Fe-2S]-[ferredoxin] + 2 S-adenosyl-L-methionine = 2-methyladenosine(37) in tRNA + 5'-deoxyadenosine + L-methionine + 2 oxidized [2Fe-2S]-[ferredoxin] + S-adenosyl-L-homocysteine. Specifically methylates position 2 of adenine 2503 in 23S rRNA and position 2 of adenine 37 in tRNAs. The polypeptide is Probable dual-specificity RNA methyltransferase RlmN (Bacillus mycoides (strain KBAB4) (Bacillus weihenstephanensis)).